We begin with the raw amino-acid sequence, 151 residues long: Ribosome maturation factor RimP (151 aa).

This sequence belongs to the RimP family.

The protein localises to the cytoplasm. Functionally, required for maturation of 30S ribosomal subunits. In Desulfotalea psychrophila (strain LSv54 / DSM 12343), this protein is Ribosome maturation factor RimP.